The primary structure comprises 543 residues: Protein SGE1 (543 aa).

The Cytoplasmic segment spans residues 1 to 8 (MKSTLSLT). A helical transmembrane segment spans residues 9–29 (LCVISLLLTLFLAALDIVIVV). Topologically, residues 30 to 41 (TLYDTIGIKFHD) are extracellular. Residues 42-62 (FGNIGWLVTGYALSNAVFMLL) traverse the membrane as a helical segment. The Cytoplasmic portion of the chain corresponds to 63-79 (WGRLAEILGTKECLMIS). The chain crosses the membrane as a helical span at residues 80-100 (VIVFEIGSLISALSNSMATLI). The Extracellular portion of the chain corresponds to 101-103 (SGR). The helical transmembrane segment at 104 to 124 (VVAGFGGSGIESLAFVVGTSI) threads the bilayer. Topologically, residues 125 to 131 (VRENHRG) are cytoplasmic. Residues 132-152 (IMITALAISYVIAEGVGPFIG) form a helical membrane-spanning segment. At 153-162 (GAFNEHLSWR) the chain is on the extracellular side. A helical membrane pass occupies residues 163 to 183 (WCFYINLPIGAFAFIILAFCN). Residues 184 to 227 (TSGEPHQKMWLPSKIKKIMNYDYGELLKASFWKNTFEVLVFKLD) lie on the Cytoplasmic side of the membrane. A helical membrane pass occupies residues 228-248 (MVGIILSSAGFTLLMLGLSFG). Over 249 to 255 (GNNFPWN) the chain is Extracellular. The chain crosses the membrane as a helical span at residues 256–276 (SGIIICFFTVGPILLLLFCAY). The Cytoplasmic segment spans residues 277–300 (DFHFLSLSGLHYDNKRIKPLLTWN). The chain crosses the membrane as a helical span at residues 301-321 (IASNCGIFTSSITGFLSCFAY). The Extracellular segment spans residues 322–341 (ELQSAYLVQLYQLVFKKKPT). Residues 342–362 (LASIHLWELSIPAMIATMAIA) form a helical membrane-spanning segment. Residues 363-373 (YLNSKYGIIKP) are Cytoplasmic-facing. A helical transmembrane segment spans residues 374-394 (AIVFGVLCGIVGSGLFTLING). The Extracellular portion of the chain corresponds to 395–399 (ELSQS). A helical membrane pass occupies residues 400–420 (IGYSILPGIAFGSIFQATLLS). Residues 421 to 443 (SQVQITSDDPDFQNKFIEVTAFN) are Cytoplasmic-facing. Residues 444–464 (SFAKSLGFAFGGNMGAMIFTA) form a helical membrane-spanning segment. Residues 465–508 (SLKNQMRSSQLNIPQFTSVETLLAYSTEHYDGPQSSLSKFINTA) are Extracellular-facing. Residues 509 to 529 (IHDVFYCALGCYALSFFFGIF) traverse the membrane as a helical segment. The Cytoplasmic segment spans residues 530-543 (TSSKKTTISAKKQQ).

It belongs to the major facilitator superfamily.

It is found in the membrane. Functionally, drug export permease. Multi-copy suppressor of loss-of-function mutation of GAL11. Involved specifically in transcription of GAL4-dependent genes. Can link GAL4 with the basal transcription machinery if GAL11 is missing. Confers resistance to 10-N-nonyl acridine orange (NAO) and in general to cationic dyes. The polypeptide is Protein SGE1 (SGE1) (Saccharomyces cerevisiae (strain ATCC 204508 / S288c) (Baker's yeast)).